The following is a 274-amino-acid chain: MPQGITKTSNQIIPEVLAPMMQAQLEKKLRFASFAEVDSTLQGQPGDTLTFPAFVYSGDAQVVAEGEKIPTDILETKKREAKIRKIAKGTSITDEALLSGYGDPQGEQVRQHGLAHANKVDNDVLEALMGAKLTVNADITKLNGLQSAIDKFNDEDLEPMVLFINPLDAGKLRGDASTNFTRATELGDDIIVKGAFGEALGAIIVRTNKLEAGTAILAKKGAVKLILKRDFFLEVARDASTKTTALYSDKHYVAYLYDESKAVKITKGSGSLEM.

The protein localises to the virion. Assembles to form an icosahedral capsid. This Staphylococcus phage phiMR11 protein is Major capsid protein.